The following is a 471-amino-acid chain: Eremophilane O-acetyltransferase ORF8 (471 aa).

The protein belongs to the fumigaclavine B O-acetyltransferase family. Monomer.

It participates in sesquiterpene biosynthesis. Functionally, O-acetyltransferase; part of the gene cluster that mediates the biosynthesis of PR-toxin, a bicyclic sesquiterpene belonging to the eremophilane class and acting as a mycotoxin. The first step of the pathway is catalyzed by the aristolochene synthase which performs the cyclization of trans,trans-farnesyl diphosphate (FPP) to the bicyclic sesquiterpene aristolochene. Following the formation of aristolochene, the non-oxygenated aristolochene is converted to the trioxygenated intermediate eremofortin B, via 7-epi-neopetasone. This conversion appears to involve three enzymes, a hydroxysterol oxidase-like enzyme, the quinone-oxidase prx3 that forms the quinone-type-structure in the bicyclic nucleus of aristolochene with the C8-oxo group and the C-3 hydroxyl group, and the P450 monooxygenase ORF6 that introduces the epoxide at the double bond between carbons 1 and 2. No monoxy or dioxy-intermediates have been reported to be released to the broth, so these three early oxidative reactions may be coupled together. Eremofortin B is further oxidized by another P450 monooxygenase, that introduces a second epoxide between carbons 7 and 11 prior to acetylation to eremofortin A by the acetyltransferase ORF8. The second epoxidation may be performed by a second P450 monooxygenase. After the acetylation step, eremofortin A is converted to eremofortin C and then to PR-toxin. First the conversion of eremofortin A to eremofortin C proceeds by oxidation of the side chain of the molecule at C-12 and is catalyzed by the short-chain oxidoreductase prx1. The cytochrome P450 monooxygenase ORF6 is probably also involved in this step. The primary alcohol formed at C-12 is finally oxidized by the short-chain alcohol dehydrogenase prx4 that forms PR-toxin. The chain is Eremophilane O-acetyltransferase ORF8 from Penicillium roqueforti (strain FM164).